A 782-amino-acid polypeptide reads, in one-letter code: General transcription and DNA repair factor IIH helicase/translocase subunit XPB (782 aa).

Over residues Met-1–Lys-11 the composition is skewed to basic and acidic residues. A disordered region spans residues Met-1–Thr-51. Positions Arg-6–His-18 match the Nuclear localization signal motif. Acidic residues predominate over residues Asp-21 to Pro-30. One can recognise a Helicase ATP-binding domain in the interval Met-327 to Leu-488. Leu-340–Ser-347 is an ATP binding site. The DEVH box signature appears at Asp-441–His-444. One can recognise a Helicase C-terminal domain in the interval Arg-542–Ala-702. A Phosphoserine modification is found at Ser-686. Position 751 is a phosphoserine; by CK2 (Ser-751).

Belongs to the helicase family. RAD25/XPB subfamily. Component of the 7-subunit TFIIH core complex composed of XPB/ERCC3, XPD/ERCC2, GTF2H1, GTF2H2, GTF2H3, GTF2H4 and GTF2H5, which is active in NER. The core complex associates with the 3-subunit CDK-activating kinase (CAK) module composed of CCNH/cyclin H, CDK7 and MNAT1 to form the 10-subunit holoenzyme (holo-TFIIH) active in transcription. Interacts with PUF60. Interacts with ATF7IP. Interacts with KAT2A; leading to KAT2A recruitment to promoters and acetylation of histones. Part of TBP-based Pol II pre-initiation complex (PIC), in which Pol II core assembles with general transcription factors and other specific initiation factors including GTF2E1, GTF2E2, GTF2F1, GTF2F2, TCEA1, ERCC2, ERCC3, GTF2H2, GTF2H3, GTF2H4, GTF2H5, GTF2A1, GTF2A2, GTF2B and TBP; this large multi-subunit PIC complex mediates DNA unwinding and targets Pol II core to the transcription start site where the first phosphodiester bond forms. Post-translationally, phosphorylation on Ser-751 by CK2 controls the 5'-excision activity of ERCC1-XPF endonuclease; phosphorylated protein inhibits the excision activity and thus NER. Dephosphorylation reactivates the 5'-excision step. Phosphorylation has no effect on transcription or the 3'-5' helicase activity.

It localises to the nucleus. The catalysed reaction is Couples ATP hydrolysis with the unwinding of duplex DNA by translocating in the 3'-5' direction.. It carries out the reaction ATP + H2O = ADP + phosphate + H(+). Its activity is regulated as follows. Phosphorylation on Ser-751 by CK2 controls the 5'-excision activity of ERCC1-XPF endonuclease; phosphorylated protein inhibits the excision activity and thus NER. ATPase activity is stimulated by TFIIH subunit p52 (GTF2H4). DNA translocase activity by this subunit in TFIIH is stimulated by XPA, ERCC5/XPG and XFP plus ERCC1. In terms of biological role, ATP-dependent 3'-5' DNA helicase/translocase; binds dsDNA rather than ssDNA, unzipping it in a translocase rather than classical helicase activity. Component of the general transcription and DNA repair factor IIH (TFIIH) core complex. When complexed to CDK-activating kinase (CAK), involved in RNA transcription by RNA polymerase II. The ATPase activity of XPB/ERCC3, but not its helicase activity, is required for DNA opening; it may wrap around the damaged DNA wedging it open, causing localized melting and twisting that allows XPD/ERCC2 helicase to anchor. The ATP-dependent helicase activity of XPB/ERCC3 may be required for promoter escape. Also involved in transcription-coupled nucleotide excision repair (NER) of damaged DNA. In NER, TFIIH acts by opening DNA around the lesion to allow the excision of the damaged oligonucleotide and its replacement by a new DNA fragment. The structure of the TFIIH transcription complex differs from the NER-TFIIH complex; large movements by XPD/ERCC2 and XPB/ERCC3 are stabilized by XPA. The chain is General transcription and DNA repair factor IIH helicase/translocase subunit XPB (ERCC3) from Bos taurus (Bovine).